The primary structure comprises 405 residues: Dynactin subunit 2 (405 aa).

A disordered region spans residues Met-1 to Leu-25. At Ala-2 the chain carries N-acetylalanine. Phosphotyrosine is present on Tyr-6. Phosphoserine is present on Ser-85. Residue Tyr-88 is modified to Phosphotyrosine. A coiled-coil region spans residues Tyr-105–Glu-132. Position 136 is a phosphothreonine (Thr-136). The disordered stretch occupies residues Lys-187–Ser-207. Ser-324 carries the post-translational modification Phosphoserine.

Belongs to the dynactin subunit 2 family. In terms of assembly, subunit of dynactin, a multiprotein complex part of a tripartite complex with dynein and a adapter, such as BICDL1, BICD2 or HOOK3. The dynactin complex is built around ACTR1A/ACTB filament and consists of an actin-related filament composed of a shoulder domain, a pointed end and a barbed end. Its length is defined by its flexible shoulder domain. The soulder is composed of 2 DCTN1 subunits, 4 DCTN2 and 2 DCTN3. The 4 DCNT2 (via N-terminus) bind the ACTR1A filament and act as molecular rulers to determine the length. The pointed end is important for binding dynein-dynactin cargo adapters and consists of 4 subunits: ACTR10, DCNT4, DCTN5 and DCTN6. The barbed end is composed of a CAPZA1:CAPZB heterodimers, which binds ACTR1A/ACTB filament and dynactin and stabilizes dynactin. Interacts with BICD2 and CEP135. Interacts with DYNAP. Interacts with ECPAS. Interacts with MAPRE1.

It is found in the cytoplasm. It localises to the cytoskeleton. Its subcellular location is the microtubule organizing center. The protein localises to the centrosome. The protein resides in the membrane. Part of the dynactin complex that activates the molecular motor dynein for ultra-processive transport along microtubules. In the dynactin soulder domain, binds the ACTR1A filament and acts as a molecular ruler to determine the length. Modulates cytoplasmic dynein binding to an organelle, and plays a role in prometaphase chromosome alignment and spindle organization during mitosis. Involved in anchoring microtubules to centrosomes. May play a role in synapse formation during brain development. The polypeptide is Dynactin subunit 2 (DCTN2) (Sus scrofa (Pig)).